A 199-amino-acid polypeptide reads, in one-letter code: Recombination protein RecR (199 aa).

Residues C56–C71 form a C4-type zinc finger. Residues S79–G174 form the Toprim domain.

The protein belongs to the RecR family.

May play a role in DNA repair. It seems to be involved in an RecBC-independent recombinational process of DNA repair. It may act with RecF and RecO. The polypeptide is Recombination protein RecR (Synechococcus sp. (strain JA-3-3Ab) (Cyanobacteria bacterium Yellowstone A-Prime)).